Here is a 188-residue protein sequence, read N- to C-terminus: MTRMLIIGPPGAGKGTQAARISERLGVPAISTGDIFRANIKDQTELGREAQRYTDAGNLVPDSVTNEMVRDRLSHEDVSGGFLLDGYPRTVAQVEELDRILEANGVGLDVVLLLTADNDELVSRLLGRAQEQGRTDDTEDVIRHRLDVYDEQTAPVVGVYEDRGIVVRVDGLGSIDHVTERIMAALER.

Residue 11-16 (GAGKGT) participates in ATP binding. An NMP region spans residues 31-60 (STGDIFRANIKDQTELGREAQRYTDAGNLV). AMP is bound by residues Thr32, Arg37, 58 to 60 (NLV), 86 to 89 (GYPR), and Gln93. The segment at 127–137 (GRAQEQGRTDD) is LID. Arg128 provides a ligand contact to ATP. Arg134 and Arg145 together coordinate AMP. An ATP-binding site is contributed by Gly173.

This sequence belongs to the adenylate kinase family. Monomer.

The protein resides in the cytoplasm. The enzyme catalyses AMP + ATP = 2 ADP. It participates in purine metabolism; AMP biosynthesis via salvage pathway; AMP from ADP: step 1/1. Catalyzes the reversible transfer of the terminal phosphate group between ATP and AMP. Plays an important role in cellular energy homeostasis and in adenine nucleotide metabolism. This is Adenylate kinase from Kocuria rhizophila (strain ATCC 9341 / DSM 348 / NBRC 103217 / DC2201).